The sequence spans 589 residues: Transmembrane 9 superfamily member 1 (589 aa).

Residues 1 to 24 form the signal peptide; it reads MPSSSSAAVLVFLLLVSLLTPTFA. The Lumenal segment spans residues 25–222; sequence SDSDHKYQAE…YPFFEHQIHW (198 aa). A helical membrane pass occupies residues 223-243; it reads FSIFNSFMMVIFLTGLVSMIL. Over 244 to 293 the chain is Cytoplasmic; that stretch reads MRTLRNDYAKYAREDDDLESLERDVSEESGWKLVHGDVFRPASSLVLLSA. Residues 294-314 traverse the membrane as a helical segment; that stretch reads VVGTGAQLALLVLLVILMAIV. Residues 315-321 lie on the Lumenal side of the membrane; the sequence is GTLYVGR. A helical membrane pass occupies residues 322-342; it reads GAIVTTFIVCYALTSFVSGYV. The Cytoplasmic segment spans residues 343-364; the sequence is SGGMYSRSGGKHWIKCMVLTAS. The helical transmembrane segment at 365 to 385 threads the bilayer; that stretch reads LFPFLCFGIGFLLNTIAIFYG. Over 386-395 the chain is Lumenal; the sequence is SLAAIPFGTM. Residues 396 to 416 form a helical membrane-spanning segment; sequence VVVFVIWGFISFPLALLGTVV. The Cytoplasmic portion of the chain corresponds to 417-448; it reads GRNWSGAPNNPCRVKTIPRPIPEKKWYLTPSV. The helical transmembrane segment at 449 to 469 threads the bilayer; sequence VSLMGGLLPFGSIFIEMYFVF. Residues 470 to 481 lie on the Lumenal side of the membrane; that stretch reads TSFWNYKVYYVY. The helical transmembrane segment at 482–502 threads the bilayer; that stretch reads GFMLLVFVILVIVTVCVTIVG. At 503–518 the chain is on the cytoplasmic side; it reads TYFLLNAENYHWQWTS. The helical transmembrane segment at 519–539 threads the bilayer; it reads FFSAASTAVYVYLYSIYYYYV. At 540-550 the chain is on the lumenal side; the sequence is KTKMSGFFQTS. The chain crosses the membrane as a helical span at residues 551–571; that stretch reads FYFGYTMMFCLGLGILCGAVG. At 572-589 the chain is on the cytoplasmic side; that stretch reads YLGSNLFVRRIYRNIKCD. The Endoplasmic reticulum export signal signature appears at 578-583; sequence FVRRIY. A Golgi retention signal motif is present at residues 587 to 589; it reads KCD.

This sequence belongs to the nonaspanin (TM9SF) (TC 9.A.2) family. As to expression, ubiquitous.

It localises to the endosome membrane. Its subcellular location is the golgi apparatus membrane. This Arabidopsis thaliana (Mouse-ear cress) protein is Transmembrane 9 superfamily member 1.